Here is a 65-residue protein sequence, read N- to C-terminus: Toxin CsEM1 (65 aa).

The LCN-type CS-alpha/beta domain occupies 1–65; it reads KEGYLVNSYT…VWPLPNKTCN (65 aa). 4 cysteine pairs are disulfide-bonded: Cys-12–Cys-64, Cys-16–Cys-40, Cys-25–Cys-45, and Cys-29–Cys-47.

The protein belongs to the long (4 C-C) scorpion toxin superfamily. Sodium channel inhibitor family. Beta subfamily. In terms of tissue distribution, expressed by the venom gland.

It is found in the secreted. Its function is as follows. Beta toxins bind voltage-independently at site-4 of sodium channels (Nav) and shift the voltage of activation toward more negative potentials thereby affecting sodium channel activation and promoting spontaneous and repetitive firing. Highly potent. The polypeptide is Toxin CsEM1 (Centruroides sculpturatus (Arizona bark scorpion)).